The sequence spans 446 residues: FAD-dependent monooxygenase eupB (446 aa).

The helical transmembrane segment at 10–30 (EPHIAIVGGGIVGVILTLGLL) threads the bilayer. N-linked (GlcNAc...) asparagine glycosylation is present at Asn33. Residues Glu40, Ala53, and Arg125 each coordinate FAD. Catalysis depends on residues Arg206 and Tyr239. Asn243 is a glycosylation site (N-linked (GlcNAc...) asparagine). FAD contacts are provided by Asp322 and Ala335. The N-linked (GlcNAc...) asparagine glycan is linked to Asn395.

The protein belongs to the paxM FAD-dependent monooxygenase family. The cofactor is FAD.

It localises to the membrane. Its pathway is secondary metabolite biosynthesis; terpenoid biosynthesis. FAD-dependent monooxygenase; part of the gene cluster that mediates the biosynthesis of eupenifeldin, a bistropolone meroterpenoid that acts as an antitumor agent. The first step of eupenifeldin biosynthesis is the biosynthesis of 3-methylorcinaldehyde performed by the non-reducing polyketide synthase eupA. Oxidative dearomatization of 3-methylorcinaldehyde likely catalyzed by the FAD-dependent monooxygenase eupB is followed by oxidative ring expansion by the 2-oxoglutarate-dependent dioxygenase eupC to provide the first tropolone metabolite, tropolone stipitaldehyde. In parallel, generation of sesquiterpene alpha-humulene from farnesylpyrophosphate (FPP) is catalyzed by the terpene cyclase eupE. The cytochrome P450 monooxygenase eupD then hydroxylates humulene to humulenol. The putative Diels-Alderase eupF probably catalyzes the formation of the tropolone-humulene skeleton by linking humulenol and the polyketide moiety. The short-chain dehydrogenase/reductase eupG and the flavin-dependent monooxygenase eupH are also essential for eupenifeldin biosynthesis and are likely the additional decorating enzymes of the tropolone-humulene skeleton to produce final eupenifeldin or derivatives. The chain is FAD-dependent monooxygenase eupB from Phoma sp.